Here is a 97-residue protein sequence, read N- to C-terminus: Large ribosomal subunit protein eL21 (97 aa).

Over residues 1 to 24 (MVQKAHSFRRKTRKKLRKHPRRRG) the composition is skewed to basic residues. Residues 1–25 (MVQKAHSFRRKTRKKLRKHPRRRGL) form a disordered region.

Belongs to the eukaryotic ribosomal protein eL21 family.

The polypeptide is Large ribosomal subunit protein eL21 (rpl21e) (Pyrococcus abyssi (strain GE5 / Orsay)).